The chain runs to 235 residues: 2,3-bisphosphoglycerate-dependent phosphoglycerate mutase 1 (235 aa).

Residues 8 to 15 (RHGESVAN), 21 to 22 (TG), Arg60, 87 to 90 (ERHY), Lys98, and 114 to 115 (RR) contribute to the substrate site. Catalysis depends on His9, which acts as the Tele-phosphohistidine intermediate. The active-site Proton donor/acceptor is the Glu87.

The protein belongs to the phosphoglycerate mutase family. BPG-dependent PGAM subfamily.

The enzyme catalyses (2R)-2-phosphoglycerate = (2R)-3-phosphoglycerate. It participates in carbohydrate degradation; glycolysis; pyruvate from D-glyceraldehyde 3-phosphate: step 3/5. In terms of biological role, catalyzes the interconversion of 2-phosphoglycerate and 3-phosphoglycerate. The chain is 2,3-bisphosphoglycerate-dependent phosphoglycerate mutase 1 from Latilactobacillus sakei subsp. sakei (strain 23K) (Lactobacillus sakei subsp. sakei).